Here is a 365-residue protein sequence, read N- to C-terminus: MFDMYIESGGKKLRCGYTTGSCAAAAAKAATYMLFNKKDISVIEIDTPKNIKLNLEIQDIQVEKNSISCSIVKDGGDDIDATSGLEIFAKAEEIEEGFELCGGEGVGVVTKEGLFVEKGQPAINPVPREMIKKEVLSVLPKDKGVRITIFVPRGREIAKKTFNPRLGIVDGISILGTTGIVYPMSEEALKESIRIEIRQKAVNNKDLVFVFGNMGERFLRERGYKKDNIVVISNYVGFSIECALAQGIKDLTIVGHIGKLSKIAFGCFNTHSRVSDVRLEVIALELTLMGYDLELVKKVLDQKTSEGAVRLLGEDFPMLYERIGEKVLKRLDIYAYGEANFNILMYYGSKEMKLLYESKNSNLFD.

This sequence belongs to the CbiD family.

The enzyme catalyses Co-precorrin-5B + S-adenosyl-L-methionine = Co-precorrin-6A + S-adenosyl-L-homocysteine. The protein operates within cofactor biosynthesis; adenosylcobalamin biosynthesis; cob(II)yrinate a,c-diamide from sirohydrochlorin (anaerobic route): step 6/10. Functionally, catalyzes the methylation of C-1 in cobalt-precorrin-5B to form cobalt-precorrin-6A. This Clostridium perfringens (strain ATCC 13124 / DSM 756 / JCM 1290 / NCIMB 6125 / NCTC 8237 / Type A) protein is Cobalt-precorrin-5B C(1)-methyltransferase.